The primary structure comprises 158 residues: Large ribosomal subunit protein uL16 (158 aa).

Belongs to the universal ribosomal protein uL16 family. In terms of assembly, part of the 50S ribosomal subunit.

Its function is as follows. Binds 23S rRNA and is also seen to make contacts with the A and possibly P site tRNAs. This Prochlorococcus marinus (strain MIT 9313) protein is Large ribosomal subunit protein uL16.